The primary structure comprises 60 residues: UPF0434 protein Dtpsy_1553 (60 aa).

Belongs to the UPF0434 family.

The chain is UPF0434 protein Dtpsy_1553 from Acidovorax ebreus (strain TPSY) (Diaphorobacter sp. (strain TPSY)).